Consider the following 173-residue polypeptide: Archaemetzincin (173 aa).

His-130 serves as a coordination point for Zn(2+). Glu-131 serves as the catalytic Proton acceptor. Positions 134, 140, 141, 146, 165, and 168 each coordinate Zn(2+).

Belongs to the peptidase M54 family. As to quaternary structure, monomer. Zn(2+) serves as cofactor.

Probable zinc metalloprotease whose natural substrate is unknown. This Halobacterium salinarum (strain ATCC 29341 / DSM 671 / R1) protein is Archaemetzincin.